Consider the following 165-residue polypeptide: UBA-like domain-containing protein 2-B (165 aa).

The disordered stretch occupies residues 119–165 (QQPVWLPPASPTAHLHHHHHHPQPVWPPNSQPTGGPQKAMAAMDGQR).

Belongs to the UBALD family.

The sequence is that of UBA-like domain-containing protein 2-B (ubald2-b) from Xenopus laevis (African clawed frog).